A 2559-amino-acid chain; its full sequence is Ubiquitin carboxyl-terminal hydrolase 9X (2559 aa).

Residues 1-44 (MTATTRGSPVGGNDNQGQAPDGQSQPPLQQNQTSSPDSSNENSP) show a composition bias toward polar residues. Residues 1-64 (MTATTRGSPV…DAPPQIEDEE (64 aa)) are disordered. 3 positions are modified to phosphoserine: S374, S375, and S588. Positions 967–999 (QISSNMPSSPDSSSDSSTGSPGNHGNHYSDGPN) are disordered. Over residues 969–989 (SSNMPSSPDSSSDSSTGSPGN) the composition is skewed to low complexity. The USP domain occupies 1557 to 1956 (VGLKNAGATC…NAYILFYERM (400 aa)). Residue C1566 is the Nucleophile of the active site. The interval 1592–1633 (GSDVDDDMSGDEKQDNESNVDPRDDVFGYPQQFEDKPPLSKT) is disordered. S1600 bears the Phosphoserine mark. Composition is skewed to basic and acidic residues over residues 1601 to 1617 (GDEK…RDDV) and 1624 to 1633 (FEDKPPLSKT). 4 residues coordinate Zn(2+): C1727, H1729, C1771, and C1774. H1879 functions as the Proton acceptor in the catalytic mechanism. Phosphoserine is present on S2443. A compositionally biased stretch (acidic residues) spans 2475–2484 (PEEEPDDQDA). Residues 2475 to 2559 (PEEEPDDQDA…QTKGSVKCTY (85 aa)) form a disordered region. Polar residues-rich tracts occupy residues 2503-2513 (PGSQYQQNNHV) and 2527-2537 (NNPQRTGQRAQ). Y2540 carries the post-translational modification Phosphotyrosine. S2547 carries the phosphoserine modification. T2551 is subject to Phosphothreonine.

This sequence belongs to the peptidase C19 family. As to quaternary structure, interacts with SMAD4, MARK4, NUAK1 and BIRC5/survivin. Interacts with DCX. Interacts with OTUD4 and USP7; the interaction is direct. As to expression, highest levels in liver and brain with expression also detected in heart, muscle, spleen and kidney (at protein leve). Ubiquitously expressed in adult tissues.

It localises to the cytoplasm. It is found in the cytosol. Its subcellular location is the cell projection. The protein localises to the growth cone. The protein resides in the cytoskeleton. It localises to the cilium axoneme. It catalyses the reaction Thiol-dependent hydrolysis of ester, thioester, amide, peptide and isopeptide bonds formed by the C-terminal Gly of ubiquitin (a 76-residue protein attached to proteins as an intracellular targeting signal).. Functionally, deubiquitinase involved both in the processing of ubiquitin precursors and of ubiquitinated proteins. May therefore play an important regulatory role at the level of protein turnover by preventing degradation of proteins through the removal of conjugated ubiquitin. Specifically hydrolyzes 'Lys-11'-, followed by 'Lys-63'-, 'Lys-48'- and 'Lys-6'-linked polyubiquitins chains. Essential component of TGF-beta/BMP signaling cascade. Specifically deubiquitinates monoubiquitinated SMAD4, opposing the activity of E3 ubiquitin-protein ligase TRIM33. Deubiquitinates alkylation repair enzyme ALKBH3. OTUD4 recruits USP7 and USP9X to stabilize ALKBH3, thereby promoting the repair of alkylated DNA lesions. Deubiquitinates RNA demethylase enzyme ALKBH5, promoting its stability. Deubiquitinates mTORC2 complex component RICTOR at 'Lys-294' by removing 'Lys-63'-linked polyubiquitin chains, stabilizing RICTOR and enhancing its binding to MTOR, thus promoting mTORC2 complex assembly. Regulates chromosome alignment and segregation in mitosis by regulating the localization of BIRC5/survivin to mitotic centromeres. Involved in axonal growth and neuronal cell migration. Regulates cellular clock function by enhancing the protein stability and transcriptional activity of the core circadian protein BMAL1 via its deubiquitinating activity. Acts as a regulator of peroxisome import by mediating deubiquitination of PEX5: specifically deubiquitinates PEX5 monoubiquitinated at 'Cys-11' following its retrotranslocation into the cytosol, resetting PEX5 for a subsequent import cycle. Deubiquitinates PEG10. Inhibits the activation of the Hippo signaling pathway via deubiquitination of AMOTL2 at 'Lys-337' and 'Lys-404' which prohibits its interaction with and activation of LATS2. Loss of LATS2 activation and subsequent loss of YAP1 phosphorylation results in an increase in YAP1-driven transcription of target genes. This chain is Ubiquitin carboxyl-terminal hydrolase 9X, found in Mus musculus (Mouse).